Here is a 904-residue protein sequence, read N- to C-terminus: Exo-beta-D-glucosaminidase (904 aa).

Positions 1-32 (MFHRPASVRRFVTTAVALGLLSTLSTGARAGA) are cleaved as a signal peptide. Positions 28–49 (ARAGARTHEPPPRPTTVSSTAG) are disordered. Catalysis depends on D476, which acts as the Proton donor. E545 (nucleophile) is an active-site residue. The segment covering 813–828 (STTAGTDGASTTTVTV) has biased composition (low complexity). Residues 813–833 (STTAGTDGASTTTVTVRNTGS) are disordered.

Belongs to the glycosyl hydrolase 2 family. As to quaternary structure, monomer.

It is found in the secreted. The enzyme catalyses Hydrolysis of chitosan or chitosan oligosaccharides to remove successive D-glucosamine residues from the non-reducing termini.. In terms of biological role, hydrolyzes chitosan and chitooligosaccharides with retention of anomeric configuration. Has no beta-mannosidase activity. The chain is Exo-beta-D-glucosaminidase from Streptomyces avermitilis (strain ATCC 31267 / DSM 46492 / JCM 5070 / NBRC 14893 / NCIMB 12804 / NRRL 8165 / MA-4680).